The chain runs to 235 residues: Protocatechuate 3,4-dioxygenase beta chain (235 aa).

Fe cation is bound by residues tyrosine 107, tyrosine 146, histidine 159, and histidine 161.

Belongs to the intradiol ring-cleavage dioxygenase family. In terms of assembly, the enzyme is an oligomer of 12 copies of the alpha and beta chains. The cofactor is Fe(3+).

It carries out the reaction 3,4-dihydroxybenzoate + O2 = 3-carboxy-cis,cis-muconate + 2 H(+). Its pathway is aromatic compound metabolism; beta-ketoadipate pathway; 3-carboxy-cis,cis-muconate from 3,4-dihydroxybenzoate: step 1/1. Functionally, plays an essential role in the utilization of numerous aromatic and hydroaromatic compounds via the beta-ketoadipate pathway. The sequence is that of Protocatechuate 3,4-dioxygenase beta chain (pcaH) from Burkholderia cepacia (Pseudomonas cepacia).